The following is a 610-amino-acid chain: Elongation factor 4 (610 aa).

A tr-type G domain is found at S7–K189. Residues D19 to T24 and N136 to D139 contribute to the GTP site.

The protein belongs to the TRAFAC class translation factor GTPase superfamily. Classic translation factor GTPase family. LepA subfamily.

The protein localises to the cell inner membrane. It catalyses the reaction GTP + H2O = GDP + phosphate + H(+). Its function is as follows. Required for accurate and efficient protein synthesis under certain stress conditions. May act as a fidelity factor of the translation reaction, by catalyzing a one-codon backward translocation of tRNAs on improperly translocated ribosomes. Back-translocation proceeds from a post-translocation (POST) complex to a pre-translocation (PRE) complex, thus giving elongation factor G a second chance to translocate the tRNAs correctly. Binds to ribosomes in a GTP-dependent manner. This chain is Elongation factor 4, found in Thermus thermophilus (strain ATCC 27634 / DSM 579 / HB8).